A 477-amino-acid polypeptide reads, in one-letter code: MSDDSTPKTPSRRIRHTGRRRTLHRFFCKRYTPRSLKRFLRRIHIPADRAYCMRYLADPVSTPVRVFGRTLLSRTYVRFDQQAIAHSADLKRLNAIAASIAKQRGRVNFWSLSMACASVLALLGLVYLIRNVIARRVVIGGSEAVFGARCEAAVVDLDLFNARFRLKNYAVANKHHPMWNLFEIESIDIHFDLLELSRGKFVSHTMVVEGVTWNTPRKTSGALPPRRAKRQRVRSSNPLIAKIQEKAAELAAPVSFGAGFSALKAQVDPRILLEREVKALKTPTLVQHVGAQAPKLAERWTQRVFDAHARAEKTVAAIRAVTELDFHALKDVSAIKQGIETLDRARRSTEEALATARTISHELQQDVHSTLGLAREFAAAVKADGARIARAAAAIRDIQADGGKKFISGLCTVFLARSFSHYYPYVAQMLDYVRGSQRTPSDGSPSAEAEKTAQSLTTRKRLQGVIFCLSATSLPCC.

A helical membrane pass occupies residues 107-129 (VNFWSLSMACASVLALLGLVYLI).

It localises to the membrane. This is an uncharacterized protein from Treponema pallidum (strain Nichols).